A 312-amino-acid polypeptide reads, in one-letter code: Ribonuclease HIII (312 aa).

The RNase H type-2 domain maps to 95–311; the sequence is FNCIGSDEAG…REKAQKILKP (217 aa). A divalent metal cation-binding residues include Asp101, Glu102, and Asp206.

This sequence belongs to the RNase HII family. RnhC subfamily. Requires Mn(2+) as cofactor. Mg(2+) is required as a cofactor.

It localises to the cytoplasm. It carries out the reaction Endonucleolytic cleavage to 5'-phosphomonoester.. Functionally, endonuclease that specifically degrades the RNA of RNA-DNA hybrids. This chain is Ribonuclease HIII, found in Staphylococcus aureus (strain MW2).